The primary structure comprises 45 residues: Cytochrome b559 subunit beta (45 aa).

The helical transmembrane segment at 20–36 (WLAVHTLAVPTVFFLGA) threads the bilayer. His-24 contributes to the heme binding site.

Belongs to the PsbE/PsbF family. In terms of assembly, heterodimer of an alpha subunit and a beta subunit. PSII is composed of 1 copy each of membrane proteins PsbA, PsbB, PsbC, PsbD, PsbE, PsbF, PsbH, PsbI, PsbJ, PsbK, PsbL, PsbM, PsbT, PsbX, PsbY, PsbZ, Psb30/Ycf12, peripheral proteins PsbO, CyanoQ (PsbQ), PsbU, PsbV and a large number of cofactors. It forms dimeric complexes. Heme b is required as a cofactor.

It is found in the cellular thylakoid membrane. Functionally, this b-type cytochrome is tightly associated with the reaction center of photosystem II (PSII). PSII is a light-driven water:plastoquinone oxidoreductase that uses light energy to abstract electrons from H(2)O, generating O(2) and a proton gradient subsequently used for ATP formation. It consists of a core antenna complex that captures photons, and an electron transfer chain that converts photonic excitation into a charge separation. This chain is Cytochrome b559 subunit beta, found in Trichormus variabilis (strain ATCC 29413 / PCC 7937) (Anabaena variabilis).